Here is a 253-residue protein sequence, read N- to C-terminus: Imidazole glycerol phosphate synthase subunit HisF (253 aa).

Active-site residues include Asp-11 and Asp-130.

This sequence belongs to the HisA/HisF family. Heterodimer of HisH and HisF.

The protein resides in the cytoplasm. The enzyme catalyses 5-[(5-phospho-1-deoxy-D-ribulos-1-ylimino)methylamino]-1-(5-phospho-beta-D-ribosyl)imidazole-4-carboxamide + L-glutamine = D-erythro-1-(imidazol-4-yl)glycerol 3-phosphate + 5-amino-1-(5-phospho-beta-D-ribosyl)imidazole-4-carboxamide + L-glutamate + H(+). Its pathway is amino-acid biosynthesis; L-histidine biosynthesis; L-histidine from 5-phospho-alpha-D-ribose 1-diphosphate: step 5/9. Functionally, IGPS catalyzes the conversion of PRFAR and glutamine to IGP, AICAR and glutamate. The HisF subunit catalyzes the cyclization activity that produces IGP and AICAR from PRFAR using the ammonia provided by the HisH subunit. The protein is Imidazole glycerol phosphate synthase subunit HisF of Clostridium botulinum (strain Alaska E43 / Type E3).